Reading from the N-terminus, the 386-residue chain is Prostatic acid phosphatase (386 aa).

The first 32 residues, 1–32 (MRAAPLLLARAASLSLGFLFLLFFWLDRSVLA), serve as a signal peptide directing secretion. Arg-43 provides a ligand contact to substrate. The active-site Nucleophile is the His-44. Arg-47 is a substrate binding site. Residue Asn-94 is glycosylated (N-linked (GlcNAc...) asparagine). Arg-111 lines the substrate pocket. Disulfide bonds link Cys-161-Cys-372, Cys-215-Cys-313, and Cys-347-Cys-351. Asn-220 carries N-linked (GlcNAc...) asparagine glycosylation. His-289 is a substrate binding site. Residue Asp-290 is the Proton donor of the active site. Residue Asn-333 is glycosylated (N-linked (GlcNAc...) asparagine).

The protein belongs to the histidine acid phosphatase family. Homodimer; dimer formation is required for phosphatase activity. In terms of processing, N-glycosylated. High mannose content, partially sialylated and fucosylated biantennary complex. Also fucosylated with partially sialylated triantennary complex oligosaccharides. Proteolytically cleaved in seminal fluid to produce several peptides. Peptide PAPf39, the most prominent, forms amyloid beta-sheet fibrils, SEVI (semen-derived enhancer of viral infection). As to expression, highly expressed in the prostate, restricted to glandular and ductal epithelial cells. Also expressed in bladder, kidney, pancreas, lung, cervix, testis and ovary. Weak expression in a subset of pancreatic islet cells, squamous epithelia, the pilosebaceous unit, colonic neuroendocrine cells and skin adnexal structures. Low expression in prostate carcinoma cells and tissues. In terms of tissue distribution, widely expressed. Expressed in the sarcolemma of skeletal muscle.

Its subcellular location is the secreted. The protein localises to the cell membrane. It localises to the lysosome membrane. It is found in the nucleus. The protein resides in the cytoplasm. Its subcellular location is the cytosol. The catalysed reaction is a phosphate monoester + H2O = an alcohol + phosphate. The enzyme catalyses 1-(9Z-octadecenoyl)-sn-glycero-3-phosphate + H2O = 1-(9Z-octadecenoyl)-sn-glycerol + phosphate. It carries out the reaction a ribonucleoside 5'-phosphate + H2O = a ribonucleoside + phosphate. It catalyses the reaction O-phospho-L-tyrosyl-[protein] + H2O = L-tyrosyl-[protein] + phosphate. Its activity is regulated as follows. Phosphatase activity inhibited by L(+)-tartrate, and by its derivative, alpha-benzylaminobenzylphosphonic acid. Functionally, a non-specific tyrosine phosphatase that dephosphorylates a diverse number of substrates under acidic conditions (pH 4-6) including alkyl, aryl, and acyl orthophosphate monoesters and phosphorylated proteins. Has lipid phosphatase activity and inactivates lysophosphatidic acid in seminal plasma. Its function is as follows. Tyrosine phosphatase that acts as a tumor suppressor of prostate cancer through dephosphorylation of ERBB2 and deactivation of MAPK-mediated signaling. In addition to its tyrosine phosphatase activity has ecto-5'-nucleotidase activity in dorsal root ganglion (DRG) neurons. Generates adenosine from AMP which acts as a pain suppressor. (Microbial infection) Forms amyloid beta-sheet fibrils in semen. These fibrils, termed SEVI (semen-derived enhancer of viral infection) capture HIV virions, attach them to target cells and enhance infection. SEVI amyloid fibrils are degraded by polyphenol epigallocatechin-3-gallate (EGCG), a constituent of green tea. Target cell attachment and enhancement of HIV infection is inhibited by surfen. Also similarly boosts XMRV (xenotropic murine leukemia virus-related virus) infection. In Homo sapiens (Human), this protein is Prostatic acid phosphatase.